Reading from the N-terminus, the 395-residue chain is Elongation factor Tu (395 aa).

The tr-type G domain occupies 6 to 205 (KPHINVGTIG…NALEKIDLPI (200 aa)). The segment at 15 to 22 (GHVDHGKT) is G1. Position 15 to 22 (15 to 22 (GHVDHGKT)) interacts with GTP. A Mg(2+)-binding site is contributed by Thr-22. The segment at 59 to 63 (GITIS) is G2. Residues 80–83 (DCPG) are G3. GTP-binding positions include 80 to 84 (DCPGH) and 135 to 138 (NKCD). The G4 stretch occupies residues 135 to 138 (NKCD). Residues 173–175 (SAV) form a G5 region.

Belongs to the TRAFAC class translation factor GTPase superfamily. Classic translation factor GTPase family. EF-Tu/EF-1A subfamily. In terms of assembly, monomer.

The protein localises to the cytoplasm. It carries out the reaction GTP + H2O = GDP + phosphate + H(+). Its function is as follows. GTP hydrolase that promotes the GTP-dependent binding of aminoacyl-tRNA to the A-site of ribosomes during protein biosynthesis. In Ehrlichia ruminantium (strain Gardel), this protein is Elongation factor Tu.